We begin with the raw amino-acid sequence, 105 residues long: Co-chaperonin GroES (105 aa).

This sequence belongs to the GroES chaperonin family. In terms of assembly, heptamer of 7 subunits arranged in a ring. Interacts with the chaperonin GroEL.

The protein localises to the cytoplasm. Functionally, together with the chaperonin GroEL, plays an essential role in assisting protein folding. The GroEL-GroES system forms a nano-cage that allows encapsulation of the non-native substrate proteins and provides a physical environment optimized to promote and accelerate protein folding. GroES binds to the apical surface of the GroEL ring, thereby capping the opening of the GroEL channel. The chain is Co-chaperonin GroES from Methylovorus sp. (strain SS1 / DSM 11726).